A 792-amino-acid polypeptide reads, in one-letter code: Host cell factor 2 (792 aa).

4 Kelch repeats span residues 34 to 79, 83 to 130, 207 to 255, and 257 to 303; these read LMII…GFVC, RILV…RLGH, KMYV…VIGN, and MYIF…VSDS. One can recognise a Fibronectin type-III 1 domain in the interval 359 to 449; the sequence is APSQVQLIKA…QPATKETSMK (91 aa). The interval 399-447 is disordered; it reads ASSDSSAAPNMQGVRMDPHRQGSNNIVPNSINDTINSTKTEQPATKETS. A compositionally biased stretch (polar residues) spans 419–445; the sequence is QGSNNIVPNSINDTINSTKTEQPATKE. Residue lysine 553 forms a Glycyl lysine isopeptide (Lys-Gly) (interchain with G-Cter in SUMO2) linkage. 2 Fibronectin type-III domains span residues 583–675 and 677–787; these read TPSN…TCIP and FPGA…GNNK.

In terms of assembly, binds KMT2A/MLL1. Component of the MLL1/MLL complex, at least composed of KMT2A/MLL1, ASH2L, RBBP5, DPY30, WDR5, MEN1, HCFC1 and HCFC2. Interacts with TASOR. As to expression, highly expressed in testis. Detected at lower levels in spleen, thymus, prostate, ovary, small intestine and colon.

The protein localises to the cytoplasm. It localises to the nucleus. In Homo sapiens (Human), this protein is Host cell factor 2 (HCFC2).